We begin with the raw amino-acid sequence, 312 residues long: uncharacterized protein (312 aa).

Helical transmembrane passes span 4–24 (IFLAGLAAGFQTTWTLGKVIF), 45–65 (LITPVMGLFGLSGEAAIPLVL), 75–95 (IAGILTLDLSVKEVFILAVML), 117–137 (VILAVRIGLAAVSAIVINLIW), 171–191 (GLGVLQLAAIVIPLMIIIQFL), 217–237 (TSMTMVTGLTIGLAYGAGVMI), 253–275 (AFIFLVACHAVVEDTLVFIPLGI), and 280–299 (LLLIRVTTAVLLTMAIAHTW).

The protein resides in the cell membrane. This is an uncharacterized protein from Bacillus subtilis (strain 168).